Here is a 105-residue protein sequence, read N- to C-terminus: Small ribosomal subunit protein uS10 (105 aa).

Belongs to the universal ribosomal protein uS10 family. Part of the 30S ribosomal subunit.

Functionally, involved in the binding of tRNA to the ribosomes. The sequence is that of Small ribosomal subunit protein uS10 from Bdellovibrio bacteriovorus (strain ATCC 15356 / DSM 50701 / NCIMB 9529 / HD100).